Reading from the N-terminus, the 387-residue chain is GTPase Obg (387 aa).

An Obg domain is found at 1–159 (MKFVDEAIIR…RSLKLELLLL (159 aa)). Residues 160 to 333 (ADVGLLGMPN…LALKLLDFID (174 aa)) enclose the OBG-type G domain. GTP-binding positions include 166–173 (GMPNAGKS), 191–195 (FTTLV), 213–216 (DIPG), 283–286 (NKAD), and 314–316 (SAY). Mg(2+)-binding residues include S173 and T193.

It belongs to the TRAFAC class OBG-HflX-like GTPase superfamily. OBG GTPase family. Monomer. The cofactor is Mg(2+).

The protein resides in the cytoplasm. An essential GTPase which binds GTP, GDP and possibly (p)ppGpp with moderate affinity, with high nucleotide exchange rates and a fairly low GTP hydrolysis rate. Plays a role in control of the cell cycle, stress response, ribosome biogenesis and in those bacteria that undergo differentiation, in morphogenesis control. The chain is GTPase Obg from Shewanella pealeana (strain ATCC 700345 / ANG-SQ1).